The primary structure comprises 464 residues: Glycine--tRNA ligase (464 aa).

Positions 104 and 175 each coordinate substrate. ATP contacts are provided by residues 207–209, 217–222, 292–293, and 336–339; these read RNE, FRTREF, EL, and GVNR. A substrate-binding site is contributed by 222–226; sequence FEQME. 332–336 serves as a coordination point for substrate; that stretch reads EPALG.

The protein belongs to the class-II aminoacyl-tRNA synthetase family. As to quaternary structure, homodimer.

Its subcellular location is the cytoplasm. The catalysed reaction is tRNA(Gly) + glycine + ATP = glycyl-tRNA(Gly) + AMP + diphosphate. Functionally, catalyzes the attachment of glycine to tRNA(Gly). The chain is Glycine--tRNA ligase from Leptospira borgpetersenii serovar Hardjo-bovis (strain JB197).